An 842-amino-acid polypeptide reads, in one-letter code: MTDTTLPPEGEAHDRIEPVDIQQEMQRSYIDYAMSVIVGRALPEVRDGLKPVHRRVLYAMYDSGFRPDRSHAKSARSVAETMGNYHPHGDASIYDTLVRMAQPWSLRYPLVDGQGNFGSPGNDPPAAMRYTEARLTPLAMEMLREIDEETVDFIPNYDGRVQEPTVLPSRFPNLLANGSGGIAVGMATNIPPHNLGELAEAVYWCLENYEADEEATCEAVMERVKGPDFPTSGLIVGTQGIEDTYKTGRGSIKMRGVVEIEEDSRGRTSIVITELPYQVNHDNFITSIAEQVRDGKLAGISNIEDQSSDRVGLRIVVELKRDAVAKVVLNNLYKHTQLQTSFGANMLSIVDGVPRTLRLDQLIRLYVDHQLDVIVRRTRYRLRKANERAHILRGLVKALDALDEVIALIRASQTVDIARAGLIELLDIDDIQAQAILDMQLRRLAALERQKIVDDLAKIEAEIADLEDILAKPERQRGIVRDELKEIVDKHGDARRTRIVPADGEVSDEDLIAREDVVVTITETGYAKRTKTDLYRSQKRGGKGVQGAGLKQDDMVNHFFVCSTHDWILFFTTQGRVYRAKAYELPEASRTARGQHVANLLAFQPEERIAQVIQIKSYEDAPYLVLATRNGLVKKSKLSDFDSNRSGGIVAINLREGDELVGAVLCSAEDDLLLVSANGQSIRFSATDEALRPMGRATSGVQGMRFNEDDRLLSLNVVRPDTYLLVATSGGYAKRTSIDEYSVQGRGGKGILTIQYDRKRGSLVGALIVDDDTELYAITSTGGVIRTAARQVRKAGRQTKGVRLMNLAEGDTLIAIARNADEDEAAESISESDADTAESPEA.

Residues 42 to 511 (LPEVRDGLKP…ADGEVSDEDL (470 aa)) form the Topo IIA-type catalytic domain. The active-site O-(5'-phospho-DNA)-tyrosine intermediate is the tyrosine 130. Residues 538 to 544 (QKRGGKG) carry the GyrA-box motif. Residues 822-842 (EDEAAESISESDADTAESPEA) are disordered.

It belongs to the type II topoisomerase GyrA/ParC subunit family. As to quaternary structure, heterotetramer, composed of two GyrA and two GyrB chains. In the heterotetramer, GyrA contains the active site tyrosine that forms a transient covalent intermediate with DNA, while GyrB binds cofactors and catalyzes ATP hydrolysis.

It is found in the cytoplasm. It catalyses the reaction ATP-dependent breakage, passage and rejoining of double-stranded DNA.. Its activity is regulated as follows. Inhibited by 4-quinoline drugs (nalidixic acid, ciprofloxacin, ofloxacin), although it is much less sensitive than the corresponding enzyme from E.coli. In terms of biological role, a type II topoisomerase that negatively supercoils closed circular double-stranded (ds) DNA in an ATP-dependent manner to modulate DNA topology and maintain chromosomes in an underwound state. Negative supercoiling favors strand separation, and DNA replication, transcription, recombination and repair, all of which involve strand separation. Also able to catalyze the interconversion of other topological isomers of dsDNA rings, including catenanes and knotted rings. Type II topoisomerases break and join 2 DNA strands simultaneously in an ATP-dependent manner. This is DNA gyrase subunit A from Mycolicibacterium smegmatis (strain ATCC 700084 / mc(2)155) (Mycobacterium smegmatis).